A 219-amino-acid chain; its full sequence is 2-C-methyl-D-erythritol 4-phosphate cytidylyltransferase (219 aa).

This sequence belongs to the IspD/TarI cytidylyltransferase family. IspD subfamily.

It catalyses the reaction 2-C-methyl-D-erythritol 4-phosphate + CTP + H(+) = 4-CDP-2-C-methyl-D-erythritol + diphosphate. The protein operates within isoprenoid biosynthesis; isopentenyl diphosphate biosynthesis via DXP pathway; isopentenyl diphosphate from 1-deoxy-D-xylulose 5-phosphate: step 2/6. In terms of biological role, catalyzes the formation of 4-diphosphocytidyl-2-C-methyl-D-erythritol from CTP and 2-C-methyl-D-erythritol 4-phosphate (MEP). The sequence is that of 2-C-methyl-D-erythritol 4-phosphate cytidylyltransferase from Bacteroides fragilis (strain ATCC 25285 / DSM 2151 / CCUG 4856 / JCM 11019 / LMG 10263 / NCTC 9343 / Onslow / VPI 2553 / EN-2).